Here is a 921-residue protein sequence, read N- to C-terminus: Isoleucine--tRNA ligase (921 aa).

A 'HIGH' region motif is present at residues 57-67 (PYANGDIHMGH). L-isoleucyl-5'-AMP is bound at residue E552. Positions 593 to 597 (KMSKS) match the 'KMSKS' region motif. ATP is bound at residue K596. C887, C890, C907, and C910 together coordinate Zn(2+).

This sequence belongs to the class-I aminoacyl-tRNA synthetase family. IleS type 1 subfamily. In terms of assembly, monomer. Zn(2+) serves as cofactor.

It is found in the cytoplasm. It carries out the reaction tRNA(Ile) + L-isoleucine + ATP = L-isoleucyl-tRNA(Ile) + AMP + diphosphate. Functionally, catalyzes the attachment of isoleucine to tRNA(Ile). As IleRS can inadvertently accommodate and process structurally similar amino acids such as valine, to avoid such errors it has two additional distinct tRNA(Ile)-dependent editing activities. One activity is designated as 'pretransfer' editing and involves the hydrolysis of activated Val-AMP. The other activity is designated 'posttransfer' editing and involves deacylation of mischarged Val-tRNA(Ile). The protein is Isoleucine--tRNA ligase of Halalkalibacterium halodurans (strain ATCC BAA-125 / DSM 18197 / FERM 7344 / JCM 9153 / C-125) (Bacillus halodurans).